We begin with the raw amino-acid sequence, 433 residues long: Protein translocase subunit SecY (433 aa).

Helical transmembrane passes span 17-37 (IVFT…PIPG), 71-91 (IFAL…LMSV), 117-137 (LTVL…ESIV), 141-161 (GPVV…TLVV), 184-204 (LIIF…MFEL), 212-232 (PLIA…IIFF), 268-288 (GVIP…LANF), 310-330 (YILL…AIVF), 366-386 (LTVI…LLMN), and 388-408 (YVIS…VVLD).

This sequence belongs to the SecY/SEC61-alpha family. Component of the Sec protein translocase complex. Heterotrimer consisting of SecY, SecE and SecG subunits. The heterotrimers can form oligomers, although 1 heterotrimer is thought to be able to translocate proteins. Interacts with the ribosome. Interacts with SecDF, and other proteins may be involved. Interacts with SecA.

It is found in the cell inner membrane. In terms of biological role, the central subunit of the protein translocation channel SecYEG. Consists of two halves formed by TMs 1-5 and 6-10. These two domains form a lateral gate at the front which open onto the bilayer between TMs 2 and 7, and are clamped together by SecE at the back. The channel is closed by both a pore ring composed of hydrophobic SecY resides and a short helix (helix 2A) on the extracellular side of the membrane which forms a plug. The plug probably moves laterally to allow the channel to open. The ring and the pore may move independently. In Rickettsia conorii (strain ATCC VR-613 / Malish 7), this protein is Protein translocase subunit SecY.